The sequence spans 115 residues: Sericin-1 (115 aa).

Residues 1–115 (GSSGSSGSSG…GGSSSTSSSN (115 aa)) are disordered.

As to expression, produced exclusively in the middle (MSG) section of silk glands.

Its subcellular location is the secreted. In terms of biological role, provides the silk fibroin thread with a sticky coating. Acts as a cement by sticking silk threads together. This Galleria mellonella (Greater wax moth) protein is Sericin-1 (SER1).